Consider the following 331-residue polypeptide: Elongation factor Ts, mitochondrial (331 aa).

A mitochondrion-targeting transit peptide spans 1 to 14 (MIVSRQVIRSVVRK).

This sequence belongs to the EF-Ts family.

The protein localises to the mitochondrion. Functionally, associates with the EF-Tu.GDP complex and induces the exchange of GDP to GTP. It remains bound to the aminoacyl-tRNA.EF-Tu.GTP complex up to the GTP hydrolysis stage on the ribosome. The polypeptide is Elongation factor Ts, mitochondrial (Brugia malayi (Filarial nematode worm)).